Here is a 588-residue protein sequence, read N- to C-terminus: Adenine deaminase (588 aa).

Belongs to the metallo-dependent hydrolases superfamily. Adenine deaminase family. In terms of assembly, homodimer. The cofactor is Mn(2+).

The enzyme catalyses adenine + H2O + H(+) = hypoxanthine + NH4(+). The polypeptide is Adenine deaminase (Shigella flexneri serotype 5b (strain 8401)).